The chain runs to 234 residues: 2-C-methyl-D-erythritol 4-phosphate cytidylyltransferase (234 aa).

The protein belongs to the IspD/TarI cytidylyltransferase family. IspD subfamily.

It carries out the reaction 2-C-methyl-D-erythritol 4-phosphate + CTP + H(+) = 4-CDP-2-C-methyl-D-erythritol + diphosphate. It participates in isoprenoid biosynthesis; isopentenyl diphosphate biosynthesis via DXP pathway; isopentenyl diphosphate from 1-deoxy-D-xylulose 5-phosphate: step 2/6. In terms of biological role, catalyzes the formation of 4-diphosphocytidyl-2-C-methyl-D-erythritol from CTP and 2-C-methyl-D-erythritol 4-phosphate (MEP). The protein is 2-C-methyl-D-erythritol 4-phosphate cytidylyltransferase of Syntrophus aciditrophicus (strain SB).